A 324-amino-acid chain; its full sequence is MPELAVQKVVVHPLVLLSVVDHFNRIGKVGNQKRVVGVLLGSWQKKVLDVSNSFAVPFDEDDKDDSVWFLDHDYLENMYGMFKKVNARERIVGWYHTGPKLHKNDIAINELMKRYCPNSVLVIIDVKPKDLGLPTEAYISVEEVHDDGTPTSKTFEHVTSEIGAEEAEEVGVEHLLRDIKDTTVGTLSQRITNQVHGLKGLNSKLLDIRSYLEKVATGKLPINHQIIYQLQDVFNLLPDVSLQEFVKAFYLKTNDQMVVVYLASLIRSVVALHNLINNKIANRDAEKKEGQEKEESKKDRKEDKEKDKDKEKSDVKKEEKKEKK.

One can recognise an MPN domain in the interval 9–144; sequence VVVHPLVLLS…TEAYISVEEV (136 aa). Lysine 180 participates in a covalent cross-link: Glycyl lysine isopeptide (Lys-Gly) (interchain with G-Cter in ubiquitin). N6-acetyllysine is present on residues lysine 204, lysine 214, lysine 316, and lysine 317. Residues 281–324 are disordered; sequence ANRDAEKKEGQEKEESKKDRKEDKEKDKDKEKSDVKKEEKKEKK.

This sequence belongs to the peptidase M67A family. In terms of assembly, component of the 19S proteasome regulatory particle complex. The 26S proteasome consists of a 20S core particle (CP) and two 19S regulatory subunits (RP). The regulatory particle is made of a lid composed of 9 subunits including PSMD7, a base containing 6 ATPases and few additional components. Within the complex, PSMD7 interacts with subunit PSMD4 through their respective MPN domain. Interacts with TRIM5.

Its function is as follows. Component of the 26S proteasome, a multiprotein complex involved in the ATP-dependent degradation of ubiquitinated proteins. This complex plays a key role in the maintenance of protein homeostasis by removing misfolded or damaged proteins, which could impair cellular functions, and by removing proteins whose functions are no longer required. Therefore, the proteasome participates in numerous cellular processes, including cell cycle progression, apoptosis, or DNA damage repair. The polypeptide is 26S proteasome non-ATPase regulatory subunit 7 (PSMD7) (Homo sapiens (Human)).